The chain runs to 634 residues: MINKFKFYLIFLKLILILVNCQNSLNDYGFGIVDESSICTSYIGDELCKNRLSNSESIYTTPGGGGGGGIDKLSQISTLPILQKGFQSLTFSQGICKDLNFIEFGMCDSALSPCIETTPKITPGYNISLPQRVCKSVCERMLIGCPQLAIQIDCSISFLFPKIGTFYNLTKYGYTANGGMYMVPCIDTEINYEKNKVQENVGFLESCPYPLLLKNSTDPQYAEKRGYTYLTPTNCVLPCPIPNYTKRQMDSVINMSKAMSSISFVLSLFNVITFGLLIKKKSKYNVCIALMAIGSSFIYLSDIINYGVGIEKQLCPEPGRVATQRVDSLCGFTGSIFHIGITLCVLWSMTMGIVLYSKIKQFKLPNFRYFLIGNLSFTVVTLIILASAKKFQGGNGFLECWMRDRWYVVAIFWIPCGIALLLGVLSICGVIFEIYKISKNVSLKDSKVVIRELKPFVLVVTVSASLIYLFVFYFDSESKYDFYKKGVEDYILCLLTSENPLDECYTVGPNFNSYFMFYFLIRFFGILFFGIFGTSEIARNAWTESFFVTKIKSKISITTVSSSTRGGGGDTSGIKSSSSSSNSGVCNNNNSTRKNYGDDFNSKNLSQPDNTIITNNNNNDNNNKMEIELDSIDI.

The first 21 residues, 1-21 (MINKFKFYLIFLKLILILVNC), serve as a signal peptide directing secretion. Residues 22–257 (QNSLNDYGFG…QMDSVINMSK (236 aa)) are Extracellular-facing. The 145-residue stretch at 34 to 178 (DESSICTSYI…LTKYGYTANG (145 aa)) folds into the FZ domain. N-linked (GlcNAc...) asparagine glycans are attached at residues Asn126, Asn168, Asn215, Asn243, and Asn254. A helical membrane pass occupies residues 258–278 (AMSSISFVLSLFNVITFGLLI). The Cytoplasmic segment spans residues 279–287 (KKKSKYNVC). A helical membrane pass occupies residues 288-308 (IALMAIGSSFIYLSDIINYGV). Topologically, residues 309–335 (GIEKQLCPEPGRVATQRVDSLCGFTGS) are extracellular. Residues 336–356 (IFHIGITLCVLWSMTMGIVLY) traverse the membrane as a helical segment. At 357 to 368 (SKIKQFKLPNFR) the chain is on the cytoplasmic side. Residues 369 to 389 (YFLIGNLSFTVVTLIILASAK) form a helical membrane-spanning segment. Topologically, residues 390 to 410 (KFQGGNGFLECWMRDRWYVVA) are extracellular. The helical transmembrane segment at 411 to 431 (IFWIPCGIALLLGVLSICGVI) threads the bilayer. Residues 432 to 454 (FEIYKISKNVSLKDSKVVIRELK) are Cytoplasmic-facing. Residues 455–475 (PFVLVVTVSASLIYLFVFYFD) form a helical membrane-spanning segment. Topologically, residues 476 to 513 (SESKYDFYKKGVEDYILCLLTSENPLDECYTVGPNFNS) are extracellular. A helical transmembrane segment spans residues 514–534 (YFMFYFLIRFFGILFFGIFGT). Residues 535-634 (SEIARNAWTE…MEIELDSIDI (100 aa)) are Cytoplasmic-facing. The tract at residues 560–624 (VSSSTRGGGG…NNNNNDNNNK (65 aa)) is disordered. 2 stretches are compositionally biased toward low complexity: residues 572–592 (SGIKSSSSSSNSGVCNNNNST) and 609–622 (DNTIITNNNNNDNN).

This sequence belongs to the G-protein coupled receptor Fz/Smo family.

The protein resides in the membrane. This is Frizzled and smoothened-like protein D (fslD) from Dictyostelium discoideum (Social amoeba).